Here is a 278-residue protein sequence, read N- to C-terminus: Tryptophan synthase alpha chain (278 aa).

Active-site proton acceptor residues include Glu-50 and Asp-61.

Belongs to the TrpA family. As to quaternary structure, tetramer of two alpha and two beta chains.

It carries out the reaction (1S,2R)-1-C-(indol-3-yl)glycerol 3-phosphate + L-serine = D-glyceraldehyde 3-phosphate + L-tryptophan + H2O. The protein operates within amino-acid biosynthesis; L-tryptophan biosynthesis; L-tryptophan from chorismate: step 5/5. Its function is as follows. The alpha subunit is responsible for the aldol cleavage of indoleglycerol phosphate to indole and glyceraldehyde 3-phosphate. The sequence is that of Tryptophan synthase alpha chain from Rhodopseudomonas palustris (strain BisA53).